Here is a 523-residue protein sequence, read N- to C-terminus: Type 2 DNA topoisomerase 6 subunit B (523 aa).

ATP is bound by residues Asn48, Asp80, 101-102 (SK), 110-117 (GQQGLGCS), and Lys436.

This sequence belongs to the TOP6B family. In terms of assembly, homodimer. Heterotetramer of two Top6A and two Top6B chains.

It carries out the reaction ATP-dependent breakage, passage and rejoining of double-stranded DNA.. Relaxes both positive and negative superturns and exhibits a strong decatenase activity. The sequence is that of Type 2 DNA topoisomerase 6 subunit B from Methanothermobacter thermautotrophicus (strain ATCC 29096 / DSM 1053 / JCM 10044 / NBRC 100330 / Delta H) (Methanobacterium thermoautotrophicum).